Here is a 360-residue protein sequence, read N- to C-terminus: tRNA N6-adenosine threonylcarbamoyltransferase (360 aa).

Residues His115 and His119 each contribute to the Fe cation site. Substrate is bound by residues 137 to 141 (LVSGG), Asp170, Gly183, and Asn283. Residue Asp311 participates in Fe cation binding.

Belongs to the KAE1 / TsaD family. It depends on Fe(2+) as a cofactor.

It is found in the cytoplasm. It carries out the reaction L-threonylcarbamoyladenylate + adenosine(37) in tRNA = N(6)-L-threonylcarbamoyladenosine(37) in tRNA + AMP + H(+). Required for the formation of a threonylcarbamoyl group on adenosine at position 37 (t(6)A37) in tRNAs that read codons beginning with adenine. Is involved in the transfer of the threonylcarbamoyl moiety of threonylcarbamoyl-AMP (TC-AMP) to the N6 group of A37, together with TsaE and TsaB. TsaD likely plays a direct catalytic role in this reaction. The sequence is that of tRNA N6-adenosine threonylcarbamoyltransferase from Rhizobium meliloti (strain 1021) (Ensifer meliloti).